Consider the following 260-residue polypeptide: MRLLVTLILLIFVLTVSGQYSCSNPCYGNMCCSIPSNNEYYLTTFCDESTACGTPCSAQTYFTADSQRFGCGVTLTICSTSGGSTTTGGTGSAGTSTSSGSGSGSGSGSGSGSGSGSGTSGSSSSGSSSGSGSGSSSGSGGSSGSGSGSTMETGGFYGVCVKAITIDAGPNISVEEEAGMAIIDASSQICQDLFGSSSCGWSDKRSITAVQSSVEDGFPVNKPFNVTFEDYNKIISNSLILDQQCSNKNNCKYNKLELMK.

The signal sequence occupies residues 1–19 (MRLLVTLILLIFVLTVSGQ). The disordered stretch occupies residues 83 to 148 (GSTTTGGTGS…SGGSSGSGSG (66 aa)). 2 stretches are compositionally biased toward gly residues: residues 101 to 119 (SGSG…GSGT) and 129 to 147 (SGSG…GSGS).

This sequence belongs to the dictyostelium lysozyme family. Post-translationally, contains disulfide bonds.

It is found in the cytoplasmic vesicle lumen. It catalyses the reaction Hydrolysis of (1-&gt;4)-beta-linkages between N-acetylmuramic acid and N-acetyl-D-glucosamine residues in a peptidoglycan and between N-acetyl-D-glucosamine residues in chitodextrins.. Functionally, has antibacterial activity. This is Lysozyme D (alyD-1) from Dictyostelium discoideum (Social amoeba).